Reading from the N-terminus, the 380-residue chain is Cytochrome b (380 aa).

The next 4 helical transmembrane spans lie at 34-54 (FGSLLGICLVTQIVTGLLLAM), 78-99 (WLIRNLHANGASFFFICIYLHI), 114-134 (WNVGVILLLTLMATAFVGYVL), and 179-199 (FFALHFLLPFVIAGLTLVHLT). Heme b contacts are provided by histidine 84 and histidine 98. Positions 183 and 197 each coordinate heme b. Residue histidine 202 participates in a ubiquinone binding. The next 4 membrane-spanning stretches (helical) occupy residues 227–247 (IKDILGFALMLASLVALALFS), 289–309 (LGGVLALAASILVLFLMPLLH), 321–341 (LSQILFWVLVTNVLILTWIGS), and 348–368 (FIIIGQLASLSYFTIILVLFP).

The protein belongs to the cytochrome b family. The cytochrome bc1 complex contains 11 subunits: 3 respiratory subunits (MT-CYB, CYC1 and UQCRFS1), 2 core proteins (UQCRC1 and UQCRC2) and 6 low-molecular weight proteins (UQCRH/QCR6, UQCRB/QCR7, UQCRQ/QCR8, UQCR10/QCR9, UQCR11/QCR10 and a cleavage product of UQCRFS1). This cytochrome bc1 complex then forms a dimer. Heme b is required as a cofactor.

It localises to the mitochondrion inner membrane. Component of the ubiquinol-cytochrome c reductase complex (complex III or cytochrome b-c1 complex) that is part of the mitochondrial respiratory chain. The b-c1 complex mediates electron transfer from ubiquinol to cytochrome c. Contributes to the generation of a proton gradient across the mitochondrial membrane that is then used for ATP synthesis. The chain is Cytochrome b (MT-CYB) from Vireo olivaceus (Red-eyed vireo).